The primary structure comprises 269 residues: 5'-methylthioadenosine/S-adenosylhomocysteine nucleosidase (269 aa).

Catalysis depends on glutamate 12, which acts as the Proton acceptor. Substrate contacts are provided by residues glycine 77, valine 174, and methionine 194–glutamate 195. Residue aspartate 218 is the Proton donor of the active site.

Belongs to the PNP/UDP phosphorylase family. MtnN subfamily.

It catalyses the reaction S-adenosyl-L-homocysteine + H2O = S-(5-deoxy-D-ribos-5-yl)-L-homocysteine + adenine. The catalysed reaction is S-methyl-5'-thioadenosine + H2O = 5-(methylsulfanyl)-D-ribose + adenine. The enzyme catalyses 5'-deoxyadenosine + H2O = 5-deoxy-D-ribose + adenine. It functions in the pathway amino-acid biosynthesis; L-methionine biosynthesis via salvage pathway; S-methyl-5-thio-alpha-D-ribose 1-phosphate from S-methyl-5'-thioadenosine (hydrolase route): step 1/2. Catalyzes the irreversible cleavage of the glycosidic bond in both 5'-methylthioadenosine (MTA) and S-adenosylhomocysteine (SAH/AdoHcy) to adenine and the corresponding thioribose, 5'-methylthioribose and S-ribosylhomocysteine, respectively. Also cleaves 5'-deoxyadenosine, a toxic by-product of radical S-adenosylmethionine (SAM) enzymes, into 5-deoxyribose and adenine. The polypeptide is 5'-methylthioadenosine/S-adenosylhomocysteine nucleosidase (mtnN) (Treponema pallidum (strain Nichols)).